A 482-amino-acid chain; its full sequence is Catalase easC (482 aa).

H58 is a catalytic residue. Y347 is a heme binding site.

The protein belongs to the catalase family. Requires heme as cofactor.

It participates in alkaloid biosynthesis; ergot alkaloid biosynthesis. Functionally, catalase; part of the gene cluster that mediates the biosynthesis of fungal ergot alkaloid. DmaW catalyzes the first step of ergot alkaloid biosynthesis by condensing dimethylallyl diphosphate (DMAP) and tryptophan to form 4-dimethylallyl-L-tryptophan. The second step is catalyzed by the methyltransferase easF that methylates 4-dimethylallyl-L-tryptophan in the presence of S-adenosyl-L-methionine, resulting in the formation of 4-dimethylallyl-L-abrine. The catalase easC and the FAD-dependent oxidoreductase easE then transform 4-dimethylallyl-L-abrine to chanoclavine-I which is further oxidized by easD in the presence of NAD(+), resulting in the formation of chanoclavine-I aldehyde. Chanoclavine-I aldehyde is the precursor of ergoamides and ergopeptines in Clavicipitaceae, and clavine-type alcaloids such as fumiclavine in Trichocomaceae. However, the metabolites downstream of chanoclavine-I aldehyde in Arthrodermataceae have not been identified yet. The sequence is that of Catalase easC from Arthroderma otae (strain ATCC MYA-4605 / CBS 113480) (Microsporum canis).